The sequence spans 339 residues: Nicotinate-nucleotide--dimethylbenzimidazole phosphoribosyltransferase (339 aa).

The Proton acceptor role is filled by glutamate 306.

Belongs to the CobT family.

The catalysed reaction is 5,6-dimethylbenzimidazole + nicotinate beta-D-ribonucleotide = alpha-ribazole 5'-phosphate + nicotinate + H(+). The protein operates within nucleoside biosynthesis; alpha-ribazole biosynthesis; alpha-ribazole from 5,6-dimethylbenzimidazole: step 1/2. Its function is as follows. Catalyzes the synthesis of alpha-ribazole-5'-phosphate from nicotinate mononucleotide (NAMN) and 5,6-dimethylbenzimidazole (DMB). The polypeptide is Nicotinate-nucleotide--dimethylbenzimidazole phosphoribosyltransferase (Brucella melitensis biotype 1 (strain ATCC 23456 / CCUG 17765 / NCTC 10094 / 16M)).